A 958-amino-acid chain; its full sequence is Glycine dehydrogenase (decarboxylating) (958 aa).

N6-(pyridoxal phosphate)lysine is present on lysine 708.

It belongs to the GcvP family. The glycine cleavage system is composed of four proteins: P, T, L and H. The cofactor is pyridoxal 5'-phosphate.

The catalysed reaction is N(6)-[(R)-lipoyl]-L-lysyl-[glycine-cleavage complex H protein] + glycine + H(+) = N(6)-[(R)-S(8)-aminomethyldihydrolipoyl]-L-lysyl-[glycine-cleavage complex H protein] + CO2. The glycine cleavage system catalyzes the degradation of glycine. The P protein binds the alpha-amino group of glycine through its pyridoxal phosphate cofactor; CO(2) is released and the remaining methylamine moiety is then transferred to the lipoamide cofactor of the H protein. The chain is Glycine dehydrogenase (decarboxylating) from Photorhabdus laumondii subsp. laumondii (strain DSM 15139 / CIP 105565 / TT01) (Photorhabdus luminescens subsp. laumondii).